Here is a 640-residue protein sequence, read N- to C-terminus: Serine/threonine-protein phosphatase with EF-hands 1 (640 aa).

The region spanning 16 to 45 (VVRAALIIQNWYRRYRARLSARQHYALAIF) is the IQ domain. Positions 122-445 (INLLLQAFKQ…PQFFQYQVTS (324 aa)) are catalytic. Residues Asp173, His175, Asp202, and Asn234 each coordinate Mn(2+). His235 (proton donor) is an active-site residue. The Mn(2+) site is built by His286 and His393. 3 EF-hand domains span residues 473-508 (ARKT…ILGL), 556-591 (RYRS…FNAH), and 596-631 (IDDS…VHKY). Asp569, Asp571, Ser573, Glu580, Asp609, Asn611, Asp613, Asn615, and Glu620 together coordinate Ca(2+).

Belongs to the PPP phosphatase family. The cofactor is Mn(2+). Requires Mg(2+) as cofactor.

The catalysed reaction is O-phospho-L-seryl-[protein] + H2O = L-seryl-[protein] + phosphate. It carries out the reaction O-phospho-L-threonyl-[protein] + H2O = L-threonyl-[protein] + phosphate. Its activity is regulated as follows. Activated by calcium. Functionally, may have a role in the recovery or adaptation response of photoreceptors. May have a role in development. The sequence is that of Serine/threonine-protein phosphatase with EF-hands 1 (Ppef1) from Rattus norvegicus (Rat).